Here is a 1203-residue protein sequence, read N- to C-terminus: Cingulin (1203 aa).

A head region spans residues 7-357 (MAEPRGPVDH…VMVSSGSTKA (351 aa)). The tract at residues 25–48 (EPVSGAEMGTLRRGGRRPAKDARA) is disordered. The ZIM signature appears at 48-62 (ASTYGVAVRVQGIAG). The segment at 54 to 67 (AVRVQGIAGQPFVV) is interaction with TJP1/ZO1. A disordered region spans residues 89-127 (GASGALSSDLELPENPYSQVKGFPAPSQSSTSDEEPGAY). Ser-95, Ser-96, Ser-135, Ser-137, Ser-140, Ser-155, Ser-165, Ser-214, Ser-217, Ser-258, Ser-276, Ser-338, and Ser-351 each carry phosphoserine. The segment at 186–266 (DSQLGGQARG…LSPLSGFSRS (81 aa)) is disordered. The segment covering 207–231 (EQRKRSKSLDSRLPRDTFEERERQS) has biased composition (basic and acidic residues). The span at 232 to 266 (TNHWTSSTKYDNHVGTSKQPAQSQNLSPLSGFSRS) shows a compositional bias: polar residues. Residues 358–1160 (VAGQGELTRK…SLEKDSWRKA (803 aa)) are a coiled coil. Lys-579 carries the post-translational modification N6-acetyllysine. Phosphothreonine is present on Thr-712. 2 disordered regions span residues 1034–1053 (LASS…LESQ) and 1154–1181 (KDSW…EEFD). The span at 1044 to 1053 (SASLSQLESQ) shows a compositional bias: low complexity. Residues 1161-1203 (SRSAAESALKNEGLSSDEEFDSVYDPSSIASLLTESNLQTSSC) form a tail region. Ser-1175, Ser-1176, and Ser-1182 each carry phosphoserine.

Belongs to the cingulin family. As to quaternary structure, homodimer. Interacts with TJP1/ZO1. Interacts with SPEF1. In terms of tissue distribution, localized on the cytoplasmic face of tight junctions of polarized epithelia and some endothelia. Expressed in pancreas, kidney, liver and lung, but not in skeletal muscle, placenta, brain or heart.

The protein resides in the cell junction. The protein localises to the tight junction. Functionally, probably plays a role in the formation and regulation of the tight junction (TJ) paracellular permeability barrier. The chain is Cingulin from Homo sapiens (Human).